We begin with the raw amino-acid sequence, 369 residues long: UDP-N-acetylglucosamine--N-acetylmuramyl-(pentapeptide) pyrophosphoryl-undecaprenol N-acetylglucosamine transferase (369 aa).

UDP-N-acetyl-alpha-D-glucosamine is bound by residues 16–18 (TGG), Asn130, Arg171, Ser203, Ile253, and Gln298.

It belongs to the glycosyltransferase 28 family. MurG subfamily.

The protein resides in the cell inner membrane. It carries out the reaction di-trans,octa-cis-undecaprenyl diphospho-N-acetyl-alpha-D-muramoyl-L-alanyl-D-glutamyl-meso-2,6-diaminopimeloyl-D-alanyl-D-alanine + UDP-N-acetyl-alpha-D-glucosamine = di-trans,octa-cis-undecaprenyl diphospho-[N-acetyl-alpha-D-glucosaminyl-(1-&gt;4)]-N-acetyl-alpha-D-muramoyl-L-alanyl-D-glutamyl-meso-2,6-diaminopimeloyl-D-alanyl-D-alanine + UDP + H(+). Its pathway is cell wall biogenesis; peptidoglycan biosynthesis. In terms of biological role, cell wall formation. Catalyzes the transfer of a GlcNAc subunit on undecaprenyl-pyrophosphoryl-MurNAc-pentapeptide (lipid intermediate I) to form undecaprenyl-pyrophosphoryl-MurNAc-(pentapeptide)GlcNAc (lipid intermediate II). In Cytophaga hutchinsonii (strain ATCC 33406 / DSM 1761 / CIP 103989 / NBRC 15051 / NCIMB 9469 / D465), this protein is UDP-N-acetylglucosamine--N-acetylmuramyl-(pentapeptide) pyrophosphoryl-undecaprenol N-acetylglucosamine transferase.